The following is a 272-amino-acid chain: Centromere protein V-like protein 1 (272 aa).

Residues 1–17 are compositionally biased toward basic residues; sequence MGRVRNRATAQRRRRKR. Disordered stretches follow at residues 1–23 and 65–95; these read MGRVRNRATAQRRRRKRPGDPPA and RRVRKAGPRDLLPSAPTPDPPGPAPSPKDLD. A compositionally biased stretch (pro residues) spans 79–90; the sequence is APTPDPPGPAPS. One can recognise a CENP-V/GFA domain in the interval 133 to 246; the sequence is HTGGCHCGAV…EEVGGGDPGE (114 aa). Zn(2+) is bound by residues Cys-137, Cys-139, Cys-157, Cys-159, Cys-162, Cys-201, and Cys-204. The disordered stretch occupies residues 240–272; it reads GGGDPGEEAAEEHKAIHKTSSQSAPACPREQEQ.

It belongs to the Gfa family. Zn(2+) serves as cofactor.

This Homo sapiens (Human) protein is Centromere protein V-like protein 1.